A 355-amino-acid polypeptide reads, in one-letter code: Methylxanthine N3-demethylase NdmB (355 aa).

The 113-residue stretch at 19–131 folds into the Rieske domain; it reads WHPVCTLNEF…CEVKYDIVWV (113 aa). [2Fe-2S] cluster is bound by residues C64, H66, C87, and H90.

[2Fe-2S] cluster serves as cofactor.

The catalysed reaction is theobromine + NADH + O2 + H(+) = 7-methylxanthine + formaldehyde + NAD(+) + H2O. It carries out the reaction theobromine + NADPH + O2 + H(+) = 7-methylxanthine + formaldehyde + NADP(+) + H2O. The enzyme catalyses 3-methylxanthine + NADH + O2 + H(+) = xanthine + formaldehyde + NAD(+) + H2O. It catalyses the reaction 3-methylxanthine + NADPH + O2 + H(+) = xanthine + formaldehyde + NADP(+) + H2O. Its function is as follows. Involved in the caffeine degradation, which is the essential first step for assimilating the carbon and nitrogen in caffeine. Catalyzes the N3-demethylation of theobromine to produce 7-methylxanthine and formaldehyde. Also catalyzes the N3-demethylation of 3-methylxanthine, caffeine, and theophylline to xanthine, paraxanthine, and 1-methylxanthine, respectively. NADH is the preferred substrate. The protein is Methylxanthine N3-demethylase NdmB (ndmB) of Pseudomonas putida (Arthrobacter siderocapsulatus).